Here is a 268-residue protein sequence, read N- to C-terminus: Small ribosomal subunit protein eS1 (268 aa).

Residues 1–21 (MAVGKNKGLSKGGKKGGKKKV) form a disordered region.

Belongs to the eukaryotic ribosomal protein eS1 family. In terms of assembly, component of the small ribosomal subunit. Mature ribosomes consist of a small (40S) and a large (60S) subunit. The 40S subunit contains about 33 different proteins and 1 molecule of RNA (18S). The 60S subunit contains about 49 different proteins and 3 molecules of RNA (28S, 5.8S and 5S).

Its subcellular location is the cytoplasm. In terms of biological role, essential for oogenesis; required for late follicle cell development. This chain is Small ribosomal subunit protein eS1, found in Drosophila persimilis (Fruit fly).